A 518-amino-acid polypeptide reads, in one-letter code: 2-isopropylmalate synthase (518 aa).

The 252-residue stretch at 24-275 folds into the Pyruvate carboxyltransferase domain; it reads VYIFDTTLRD…KTNIKTQKLY (252 aa). A divalent metal cation-binding residues include aspartate 33, histidine 213, histidine 215, and asparagine 249.

This sequence belongs to the alpha-IPM synthase/homocitrate synthase family. As to quaternary structure, homodimer. A divalent metal cation is required as a cofactor.

The catalysed reaction is 3-methyl-2-oxobutanoate + acetyl-CoA + H2O = (2S)-2-isopropylmalate + CoA + H(+). Its pathway is amino-acid biosynthesis; L-leucine biosynthesis; L-leucine from 3-methyl-2-oxobutanoate: step 1/4. In terms of biological role, catalyzes the condensation of the acetyl group of acetyl-CoA with 3-methyl-2-oxobutanoate (2-oxoisovalerate) to form 3-carboxy-3-hydroxy-4-methylpentanoate (2-isopropylmalate). The chain is 2-isopropylmalate synthase (leuA) from Methanocaldococcus jannaschii (strain ATCC 43067 / DSM 2661 / JAL-1 / JCM 10045 / NBRC 100440) (Methanococcus jannaschii).